The sequence spans 745 residues: Bacteriophage N4 adsorption protein B (745 aa).

A run of 3 helical transmembrane segments spans residues 8 to 28 (FATW…IMFI), 362 to 382 (ISNF…LLLA), and 393 to 413 (FLSI…NFGL).

The protein localises to the cell inner membrane. Required for bacteriophage N4 adsorption. May be a component of the phage receptor. The protein is Bacteriophage N4 adsorption protein B (nfrB) of Escherichia coli O157:H7.